The chain runs to 502 residues: Neuronal acetylcholine receptor subunit alpha-7 (502 aa).

A signal peptide spans 1–22; the sequence is MCGGRGGIWLALAAALLHVSLQ. Residues 23–233 are Extracellular-facing; that stretch reads GEFQRRLYKE…VTMRRRTLYY (211 aa). The Ca(2+) site is built by Arg-42 and Val-44. 3 N-linked (GlcNAc...) asparagine glycosylation sites follow: Asn-46, Asn-90, and Asn-133. Residues Cys-150 and Cys-164 are joined by a disulfide bond. 2 residues coordinate Ca(2+): Ser-172 and Tyr-210. Cys-212 and Cys-213 are oxidised to a cystine. 3 consecutive transmembrane segments (helical) span residues 234-254, 262-282, and 295-315; these read GLNLLIPCVLISALALLVFLL, ISLGITVLLSLTVFMLLVAEI, and QYFASTMIIVGLSVVVTVIVL. The segment at 260–267 is essential for TMEM35A/NACHO-mediated proper subunit assembly and trafficking to cell membrane; the sequence is EKISLGIT. The Cytoplasmic segment spans residues 316-469; it reads RYHHHDPDGG…WKFAACVVDR (154 aa). Residues 470 to 490 form a helical membrane-spanning segment; that stretch reads LCLMAFSVFTIICTIGILMSA.

It belongs to the ligand-gated ion channel (TC 1.A.9) family. Acetylcholine receptor (TC 1.A.9.1) subfamily. Alpha-7/CHRNA7 sub-subfamily. In terms of assembly, homopentamer. Can also form heteropentamers with CHRNB2, mainly found in basal forebrain cholinergic neurons. Interacts with RIC3; which is required for proper folding and assembly. Interacts with LYPD6. Interacts with CANX. In terms of processing, glycosylations at Asn-46, Asn-90 and Asn-133 are essential for TMEM35A/NACHO-mediated proper subunit assembly and trafficking to the cell membrane. Expressed in neurons. Expressed in umbrella cells of urothelium (at protein level).

Its subcellular location is the postsynaptic cell membrane. It is found in the cell membrane. The catalysed reaction is Ca(2+)(in) = Ca(2+)(out). The enzyme catalyses K(+)(in) = K(+)(out). It catalyses the reaction Na(+)(in) = Na(+)(out). It carries out the reaction choline(out) = choline(in). The catalysed reaction is NH4(+)(in) = NH4(+)(out). The enzyme catalyses L-arginine(in) = L-arginine(out). It catalyses the reaction guanidine(out) = guanidine(in). Its activity is regulated as follows. Activated by a myriad of ligands such as acetylcholine, cytisine, nicotine, choline and epibatidine. Oligomeric amyloid-beta protein 42 activates specifially CHRNA7:CHRNB2 nAchRs. Activity is modulated by positive allosteric modulators (PAMs), such as flavonoids, with a wide range of chemical diversity, pharmacological sensitivity and efficacy. AChR activity is inhibited by the antagonists alpha-conotoxons RgIA, ImI and ImII, small disulfide-constrained peptides from cone snails. Alpha-conotoxin PnIC selectively inhibits CHRNA7:CHRNB2 over CHRNA7 homopentamer. Component of neuronal acetylcholine receptors (nAChRs) that function as pentameric, ligand-gated cation channels with high calcium permeability among other activities. nAChRs are excitatory neurotrasnmitter receptors formed by a collection of nAChR subunits known to mediate synaptic transmission in the nervous system and the neuromuscular junction. Each nAchR subunit confers differential attributes to channel properties, including activation, deactivation and desensitization kinetics, pH sensitivity, cation permeability, and binding to allosteric modulators. CHRNA7 forms homopentameric neuronal acetylcholine receptors abundantly expressed in the central nervous system, characterized by fast desensitization and high calcium permeability. Also forms heteropentamers with CHRNB2, mainly expressed in basal forebrain cholinergic neurons. Involved in the modulation of calcium-dependent signaling pathways and influences the release of neurotransmitters, including dopamine, glutamate and GABA. Also expressed in non-neuronal cells such as immune cells like lymphocytes, monocytes and macrophages. In T cells, activation induces metabotropic signaling that results in an increase of intracellular Ca2+ concentrations, independent of ionotropic receptor functions. In macrophages, required for acetylcholine-mediated inhibition of TNF and other inflammatory cytokine release. Once activated by acetylcholine, nicotine or other agonists, selectively inhibits production of pro-inflammatory cytokines while leaving anti-inflammatory cytokines undisturbed. Stimulates the cholinergic anti-inflammatory pathway, controlling inflammation by inhibiting NFKB nuclear translocation and activating the JAK2-STAT3 pathway, independently of ion channel activity. Also expressed in the urothelium where it modulates reflex bladder activity by increasing intracellular calcium through internal stores and decreasing basal ATP release. The chain is Neuronal acetylcholine receptor subunit alpha-7 (Chrna7) from Rattus norvegicus (Rat).